The sequence spans 233 residues: MFRIVKWLIALPVGIFIFFNAYVYGNIITYRAVAPHRTAFMSMRMKQFEQEGRDVALDYRWVPYNRISTNLKKALIASEDVRFAGHGGFDWGGIQNAIRRNRNSGEVKAGGSTISQQLAKNLFLNESRNYLRKGEEAAITAMMEAVTDKNRIFELYLNSIEWHYGVFGAEAASRYFYKKPAADLTKQQAAKLTALVPAPLYYADHPKSKRLRNKTNIVLRRMGSAELPESDTD.

Residues 8 to 28 (LIALPVGIFIFFNAYVYGNII) traverse the membrane as a helical segment.

Belongs to the glycosyltransferase 51 family.

The protein resides in the cell inner membrane. The enzyme catalyses [GlcNAc-(1-&gt;4)-Mur2Ac(oyl-L-Ala-gamma-D-Glu-L-Lys-D-Ala-D-Ala)](n)-di-trans,octa-cis-undecaprenyl diphosphate + beta-D-GlcNAc-(1-&gt;4)-Mur2Ac(oyl-L-Ala-gamma-D-Glu-L-Lys-D-Ala-D-Ala)-di-trans,octa-cis-undecaprenyl diphosphate = [GlcNAc-(1-&gt;4)-Mur2Ac(oyl-L-Ala-gamma-D-Glu-L-Lys-D-Ala-D-Ala)](n+1)-di-trans,octa-cis-undecaprenyl diphosphate + di-trans,octa-cis-undecaprenyl diphosphate + H(+). It participates in cell wall biogenesis; peptidoglycan biosynthesis. In terms of biological role, peptidoglycan polymerase that catalyzes glycan chain elongation from lipid-linked precursors. In Neisseria gonorrhoeae (strain NCCP11945), this protein is Biosynthetic peptidoglycan transglycosylase.